Here is a 331-residue protein sequence, read N- to C-terminus: D-alanine--D-alanine ligase (331 aa).

The 201-residue stretch at 116–316 folds into the ATP-grasp domain; it reads KRLWQTHSLP…YEDFVLQLAA (201 aa). Position 142 to 197 (142 to 197) interacts with ATP; the sequence is ADRLGLPLIVKPAREGSSIGLTKVTSVAELPAAYEKAARLDRDVMAEQFIDGDELT. 3 residues coordinate Mg(2+): Asp-269, Glu-283, and Asn-285.

It belongs to the D-alanine--D-alanine ligase family. The cofactor is Mg(2+). Mn(2+) serves as cofactor.

Its subcellular location is the cytoplasm. The enzyme catalyses 2 D-alanine + ATP = D-alanyl-D-alanine + ADP + phosphate + H(+). It participates in cell wall biogenesis; peptidoglycan biosynthesis. Functionally, cell wall formation. The polypeptide is D-alanine--D-alanine ligase (Ralstonia nicotianae (strain ATCC BAA-1114 / GMI1000) (Ralstonia solanacearum)).